A 141-amino-acid polypeptide reads, in one-letter code: Hemoglobin subunit alpha (141 aa).

The 141-residue stretch at 1–141 (VLSSKDKANI…VSTVLTSKYR (141 aa)) folds into the Globin domain. A Phosphoserine modification is found at S3. 2 positions are modified to N6-succinyllysine: K7 and K11. Residue K16 is modified to N6-acetyllysine; alternate. K16 is modified (N6-succinyllysine; alternate). Y24 is subject to Phosphotyrosine. At K40 the chain carries N6-succinyllysine. S49 is modified (phosphoserine). H58 is an O2 binding site. H87 is a binding site for heme b. S102 is modified (phosphoserine). T108 is modified (phosphothreonine). The residue at position 124 (S124) is a Phosphoserine. Phosphothreonine occurs at positions 134 and 137. A Phosphoserine modification is found at S138.

Belongs to the globin family. Heterotetramer of two alpha chains and two beta chains. In terms of tissue distribution, red blood cells.

In terms of biological role, involved in oxygen transport from the lung to the various peripheral tissues. Hemopressin acts as an antagonist peptide of the cannabinoid receptor CNR1. Hemopressin-binding efficiently blocks cannabinoid receptor CNR1 and subsequent signaling. This chain is Hemoglobin subunit alpha (HBA), found in Lama glama (Llama).